Here is a 269-residue protein sequence, read N- to C-terminus: Phosphonoacetaldehyde hydrolase (269 aa).

Asp10 acts as the Nucleophile in catalysis. The Mg(2+) site is built by Asp10 and Ala12. Lys52 serves as the catalytic Schiff-base intermediate with substrate. Asp186 contributes to the Mg(2+) binding site.

It belongs to the HAD-like hydrolase superfamily. PhnX family. Homodimer. The cofactor is Mg(2+).

The enzyme catalyses phosphonoacetaldehyde + H2O = acetaldehyde + phosphate + H(+). Functionally, involved in phosphonate degradation. This Salmonella typhi protein is Phosphonoacetaldehyde hydrolase.